Reading from the N-terminus, the 185-residue chain is Large ribosomal subunit protein bL25 (185 aa).

This sequence belongs to the bacterial ribosomal protein bL25 family. CTC subfamily. Part of the 50S ribosomal subunit; part of the 5S rRNA/L5/L18/L25 subcomplex. Contacts the 5S rRNA. Binds to the 5S rRNA independently of L5 and L18.

This is one of the proteins that binds to the 5S RNA in the ribosome where it forms part of the central protuberance. This is Large ribosomal subunit protein bL25 from Chlamydia trachomatis serovar A (strain ATCC VR-571B / DSM 19440 / HAR-13).